A 470-amino-acid polypeptide reads, in one-letter code: Poly(A) polymerase catalytic subunit (470 aa).

Residues D192 and D194 contribute to the active site.

This sequence belongs to the poxviridae poly(A) polymerase catalytic subunit family. As to quaternary structure, heterodimer of a large (catalytic) subunit and a small (regulatory) subunit.

The catalysed reaction is RNA(n) + ATP = RNA(n)-3'-adenine ribonucleotide + diphosphate. Its function is as follows. Polymerase that creates the 3'-poly(A) tail of mRNA's. The protein is Poly(A) polymerase catalytic subunit (PAPL) of Homo sapiens (Human).